Consider the following 233-residue polypeptide: Small ribosomal subunit protein uS2 (233 aa).

This sequence belongs to the universal ribosomal protein uS2 family.

The chain is Small ribosomal subunit protein uS2 from Clostridium novyi (strain NT).